The following is a 483-amino-acid chain: Probable zinc metalloprotease PTT_08196 (483 aa).

A signal peptide spans 1–18 (MLFRSVILSNALLLPACA). N-linked (GlcNAc...) asparagine glycans are attached at residues Asn96 and Asn121. Zn(2+) is bound by residues His167, Asp187, and Glu220. N-linked (GlcNAc...) asparagine glycosylation occurs at Asn235. Zn(2+) is bound at residue Asp247. N-linked (GlcNAc...) asparagine glycosylation is found at Asn310, Asn362, Asn401, Asn411, and Asn421. Residues 396–483 (PAMPRNVTID…KSPAVYPFPA (88 aa)) enclose the Fibronectin type-III domain.

It belongs to the peptidase M28 family. M28B subfamily. The cofactor is Zn(2+).

Its subcellular location is the secreted. In Pyrenophora teres f. teres (strain 0-1) (Barley net blotch fungus), this protein is Probable zinc metalloprotease PTT_08196.